Here is a 143-residue protein sequence, read N- to C-terminus: uncharacterized protein (143 aa).

The signal sequence occupies residues 1-24 (MKKMLMLAFTFLLALTIHVGEASA).

This is an uncharacterized protein from Bacillus subtilis (strain 168).